The sequence spans 244 residues: Carboxy-S-adenosyl-L-methionine synthase (244 aa).

Residues Y40, 65-67 (GCS), 90-91 (DN), N134, and R201 each bind S-adenosyl-L-methionine.

The protein belongs to the class I-like SAM-binding methyltransferase superfamily. Cx-SAM synthase family. In terms of assembly, homodimer.

It catalyses the reaction prephenate + S-adenosyl-L-methionine = carboxy-S-adenosyl-L-methionine + 3-phenylpyruvate + H2O. In terms of biological role, catalyzes the conversion of S-adenosyl-L-methionine (SAM) to carboxy-S-adenosyl-L-methionine (Cx-SAM). The chain is Carboxy-S-adenosyl-L-methionine synthase from Citrifermentans bemidjiense (strain ATCC BAA-1014 / DSM 16622 / JCM 12645 / Bem) (Geobacter bemidjiensis).